Reading from the N-terminus, the 687-residue chain is Amine oxidase [copper-containing] gamma 2 (687 aa).

The first 24 residues, 1–24 (MVELSFSQLLVLLLSLLFLFTTLA), serve as a signal peptide directing secretion. Residue N154 is glycosylated (N-linked (GlcNAc...) asparagine). C169 and C191 form a disulfide bridge. N244 carries N-linked (GlcNAc...) asparagine glycosylation. 333–344 (YMDAGEFGLGPS) serves as a coordination point for substrate. Catalysis depends on D335, which acts as the Proton acceptor. C354 and C380 are oxidised to a cystine. A substrate-binding site is contributed by 420–425 (VGNYDY). Residue Y423 is the Schiff-base intermediate with substrate; via topaquinone of the active site. A 2',4',5'-topaquinone modification is found at Y423. Cu cation-binding residues include H480 and H482. Mn(2+) is bound by residues D489, M490, and D491. N-linked (GlcNAc...) asparagine glycans are attached at residues N497 and N598. Mn(2+)-binding residues include D632 and I633. Residue H643 coordinates Cu cation.

It belongs to the copper/topaquinone oxidase family. Homodimer. It depends on Cu cation as a cofactor. The cofactor is Zn(2+). Requires L-topaquinone as cofactor. Mn(2+) is required as a cofactor. Post-translationally, topaquinone (TPQ) is generated by copper-dependent autoxidation of a specific tyrosyl residue. In terms of tissue distribution, expressed in roots, leaves and cotyledons.

It is found in the secreted. It localises to the extracellular space. The protein resides in the apoplast. The enzyme catalyses a primary methyl amine + O2 + H2O = an aldehyde + H2O2 + NH4(+). It participates in amine and polyamine degradation; putrescine degradation. Functionally, copper amine oxidase that can use putrescine and spermidine as substrates. This Arabidopsis thaliana (Mouse-ear cress) protein is Amine oxidase [copper-containing] gamma 2.